A 78-amino-acid chain; its full sequence is Hainantoxin-XX.2 (78 aa).

Positions 1–23 (MKSATLLALSYLLIALYFLICEA) are cleaved as a signal peptide. Positions 24–47 (EHSRYEEHEILEENMGDVVNLEQR) are excised as a propeptide. Cystine bridges form between Cys49-Cys62, Cys56-Cys66, and Cys61-Cys77.

The protein belongs to the hainantoxin family. 20 subfamily. As to expression, expressed by the venom gland.

The protein localises to the secreted. Moderately inhibits Kv1.1/KCNA1 and Kv1.2/KCNA2 and weakly inhibits Kv1.3/KCNA3, and Kv2.1/KCNB1 voltage-gated potassium channels. In Cyriopagopus hainanus (Chinese bird spider), this protein is Hainantoxin-XX.2.